An 86-amino-acid polypeptide reads, in one-letter code: MAHKKGVGSSKNGRESESKRLGVKIFGGQAAIAGNIIVRQRGSKHNPGENVYMGKDHTLHARVAGLVKFQKKGENKSYVSVVAFEA.

It belongs to the bacterial ribosomal protein bL27 family.

The chain is Large ribosomal subunit protein bL27 from Flavobacterium psychrophilum (strain ATCC 49511 / DSM 21280 / CIP 103535 / JIP02/86).